The following is a 389-amino-acid chain: Probable dual-specificity RNA methyltransferase RlmN (389 aa).

Catalysis depends on E114, which acts as the Proton acceptor. The region spanning 120–358 (QHYGLSVCVT…CVVRQEHGTD (239 aa)) is the Radical SAM core domain. A disulfide bridge links C127 with C363. [4Fe-4S] cluster is bound by residues C134, C138, and C141. S-adenosyl-L-methionine-binding positions include 186-187 (GE), S218, 241-243 (SLH), and N319. C363 (S-methylcysteine intermediate) is an active-site residue. Residues 370-389 (TMKRDRQKAVAEASGKSEGK) are disordered. Positions 371–389 (MKRDRQKAVAEASGKSEGK) are enriched in basic and acidic residues.

It belongs to the radical SAM superfamily. RlmN family. The cofactor is [4Fe-4S] cluster.

It localises to the cytoplasm. The catalysed reaction is adenosine(2503) in 23S rRNA + 2 reduced [2Fe-2S]-[ferredoxin] + 2 S-adenosyl-L-methionine = 2-methyladenosine(2503) in 23S rRNA + 5'-deoxyadenosine + L-methionine + 2 oxidized [2Fe-2S]-[ferredoxin] + S-adenosyl-L-homocysteine. It carries out the reaction adenosine(37) in tRNA + 2 reduced [2Fe-2S]-[ferredoxin] + 2 S-adenosyl-L-methionine = 2-methyladenosine(37) in tRNA + 5'-deoxyadenosine + L-methionine + 2 oxidized [2Fe-2S]-[ferredoxin] + S-adenosyl-L-homocysteine. Its function is as follows. Specifically methylates position 2 of adenine 2503 in 23S rRNA and position 2 of adenine 37 in tRNAs. This is Probable dual-specificity RNA methyltransferase RlmN from Streptococcus thermophilus (strain CNRZ 1066).